Here is a 658-residue protein sequence, read N- to C-terminus: Gametogenetin (658 aa).

Disordered regions lie at residues 1 to 268 (MGNV…ASGG) and 285 to 584 (KQGP…SNKG). Basic and acidic residues predominate over residues 14 to 30 (SRKEQASDRASDSRRTP). The segment covering 54 to 83 (PGSSGPPGLLIPPESQASSSTLPLTLELPS) has biased composition (low complexity). An interaction with GGNBP1 region spans residues 127-491 (RGLLEASHRG…APTPPSTLSP (365 aa)). Pro residues predominate over residues 163–188 (PAPPPTPLEPRKQLPPAPSTCDPQPP). Residues 194 to 204 (LASSATSPTES) show a composition bias toward polar residues. Low complexity predominate over residues 252 to 264 (SSSGPLAAKASLG). A Phosphoserine modification is found at serine 384. Residues 398–409 (PRRPTPALLAPP) show a composition bias toward low complexity. Residues 423–460 (RPVPPSPQQIPPLPPPPPTPPATPPPAPPPTPQPPALP) are compositionally biased toward pro residues. A compositionally biased stretch (low complexity) spans 489–516 (LSPTAAAEQAPAPTPAPVTSQVPATTTA). The interval 496–658 (EQAPAPTPAP…HYDLQATHST (163 aa)) is interactions with ZNF403/GGNBP2 and OAZ3. The span at 527-536 (IRTRRNKGPR) shows a compositional bias: basic residues.

Interacts with FANCL, GGNBP1 and ZNF403/GGNBP2.

In terms of biological role, may be involved in spermatogenesis. The protein is Gametogenetin (Ggn) of Rattus norvegicus (Rat).